A 308-amino-acid chain; its full sequence is Glutaminase (308 aa).

Ser66, Asn117, Glu161, Asn168, Tyr192, Tyr244, and Val262 together coordinate substrate.

This sequence belongs to the glutaminase family. Homotetramer.

It catalyses the reaction L-glutamine + H2O = L-glutamate + NH4(+). The protein is Glutaminase of Shigella dysenteriae serotype 1 (strain Sd197).